The sequence spans 308 residues: Mitochondrial import receptor subunit TOM40B (308 aa).

The segment at 281-308 is required for mitochondrial targeting; the sequence is PLPVTLALGAFLNHWRNRFHCGFSITVG.

This sequence belongs to the Tom40 family. Forms part of the preprotein translocase of the outer mitochondrial membrane (TOM complex) containing TOMM22, TOMM40, TOMM40L and TOMM70. Interacts with mitochondrial targeting sequences. Widely expressed. Higher levels in heart, brain and liver, very low level in testis.

It is found in the mitochondrion outer membrane. Its function is as follows. Potential channel-forming protein implicated in import of protein precursors into mitochondria. The chain is Mitochondrial import receptor subunit TOM40B from Rattus norvegicus (Rat).